A 527-amino-acid polypeptide reads, in one-letter code: GMP synthase [glutamine-hydrolyzing] (527 aa).

The 199-residue stretch at 4 to 202 folds into the Glutamine amidotransferase type-1 domain; it reads KILILDFGSQ…VLKICGAKPD (199 aa). The active-site Nucleophile is C81. Catalysis depends on residues H176 and E178. In terms of domain architecture, GMPS ATP-PPase spans 203–395; sequence WEMGNYIDEA…LGLPPSMVYR (193 aa). 230–236 is an ATP binding site; it reads SGGVDSS.

As to quaternary structure, homodimer.

It catalyses the reaction XMP + L-glutamine + ATP + H2O = GMP + L-glutamate + AMP + diphosphate + 2 H(+). It participates in purine metabolism; GMP biosynthesis; GMP from XMP (L-Gln route): step 1/1. In terms of biological role, catalyzes the synthesis of GMP from XMP. The sequence is that of GMP synthase [glutamine-hydrolyzing] from Paraburkholderia phymatum (strain DSM 17167 / CIP 108236 / LMG 21445 / STM815) (Burkholderia phymatum).